A 558-amino-acid chain; its full sequence is Armadillo repeat-containing X-linked protein 5 (558 aa).

2 stretches are compositionally biased toward basic and acidic residues: residues 1–14 and 139–156; these read MVDS…RGKA and KSHD…REEA. Disordered stretches follow at residues 1–34 and 139–163; these read MVDS…NGKT and KSHD…MKSS. 4 ARM repeats span residues 300 to 339, 422 to 461, 463 to 503, and 520 to 558; these read CKSR…GISP, VKFE…CLSK, HANT…NINF, and SELI…ILKL.

It belongs to the eutherian X-chromosome-specific Armcx family.

In Pongo abelii (Sumatran orangutan), this protein is Armadillo repeat-containing X-linked protein 5 (ARMCX5).